The sequence spans 162 residues: NADH-quinone oxidoreductase subunit I (162 aa).

4Fe-4S ferredoxin-type domains follow at residues 52–82 and 93–122; these read LRRY…IEAG and VRYD…EGPN. The [4Fe-4S] cluster site is built by cysteine 62, cysteine 65, cysteine 68, cysteine 72, cysteine 102, cysteine 105, cysteine 108, and cysteine 112.

It belongs to the complex I 23 kDa subunit family. NDH-1 is composed of 14 different subunits. Subunits NuoA, H, J, K, L, M, N constitute the membrane sector of the complex. [4Fe-4S] cluster serves as cofactor.

The protein resides in the cell inner membrane. The catalysed reaction is a quinone + NADH + 5 H(+)(in) = a quinol + NAD(+) + 4 H(+)(out). Its function is as follows. NDH-1 shuttles electrons from NADH, via FMN and iron-sulfur (Fe-S) centers, to quinones in the respiratory chain. The immediate electron acceptor for the enzyme in this species is believed to be ubiquinone. Couples the redox reaction to proton translocation (for every two electrons transferred, four hydrogen ions are translocated across the cytoplasmic membrane), and thus conserves the redox energy in a proton gradient. This Bradyrhizobium sp. (strain ORS 278) protein is NADH-quinone oxidoreductase subunit I.